A 172-amino-acid chain; its full sequence is Translation initiation factor IF-3 (172 aa).

This sequence belongs to the IF-3 family. In terms of assembly, monomer.

Its subcellular location is the cytoplasm. In terms of biological role, IF-3 binds to the 30S ribosomal subunit and shifts the equilibrium between 70S ribosomes and their 50S and 30S subunits in favor of the free subunits, thus enhancing the availability of 30S subunits on which protein synthesis initiation begins. In Geobacter metallireducens (strain ATCC 53774 / DSM 7210 / GS-15), this protein is Translation initiation factor IF-3.